Reading from the N-terminus, the 332-residue chain is Glycerol-3-phosphate dehydrogenase [NAD(P)+] (332 aa).

NADPH-binding residues include W11, R30, and K108. Sn-glycerol 3-phosphate contacts are provided by K108, G137, and S139. A141 is a binding site for NADPH. Sn-glycerol 3-phosphate is bound by residues K192, D245, S255, R256, and N257. The Proton acceptor role is filled by K192. R256 is an NADPH binding site. NADPH is bound by residues V280 and E282.

Belongs to the NAD-dependent glycerol-3-phosphate dehydrogenase family.

It localises to the cytoplasm. It carries out the reaction sn-glycerol 3-phosphate + NAD(+) = dihydroxyacetone phosphate + NADH + H(+). It catalyses the reaction sn-glycerol 3-phosphate + NADP(+) = dihydroxyacetone phosphate + NADPH + H(+). It functions in the pathway membrane lipid metabolism; glycerophospholipid metabolism. Functionally, catalyzes the reduction of the glycolytic intermediate dihydroxyacetone phosphate (DHAP) to sn-glycerol 3-phosphate (G3P), the key precursor for phospholipid synthesis. This Burkholderia ambifaria (strain MC40-6) protein is Glycerol-3-phosphate dehydrogenase [NAD(P)+].